The sequence spans 600 residues: Proline--tRNA ligase (600 aa).

It belongs to the class-II aminoacyl-tRNA synthetase family. ProS type 1 subfamily. Homodimer.

The protein resides in the cytoplasm. It carries out the reaction tRNA(Pro) + L-proline + ATP = L-prolyl-tRNA(Pro) + AMP + diphosphate. Its function is as follows. Catalyzes the attachment of proline to tRNA(Pro) in a two-step reaction: proline is first activated by ATP to form Pro-AMP and then transferred to the acceptor end of tRNA(Pro). As ProRS can inadvertently accommodate and process non-cognate amino acids such as alanine and cysteine, to avoid such errors it has two additional distinct editing activities against alanine. One activity is designated as 'pretransfer' editing and involves the tRNA(Pro)-independent hydrolysis of activated Ala-AMP. The other activity is designated 'posttransfer' editing and involves deacylation of mischarged Ala-tRNA(Pro). The misacylated Cys-tRNA(Pro) is not edited by ProRS. This is Proline--tRNA ligase from Prochlorococcus marinus (strain AS9601).